Consider the following 786-residue polypeptide: UPF0313 protein SO_0311 (786 aa).

A Radical SAM core domain is found at 371-649; that stretch reads AYDMIKTSIN…KALLRYHDPA (279 aa). Cys-385, Cys-389, and Cys-392 together coordinate [4Fe-4S] cluster. Disordered stretches follow at residues 669-688 and 698-786; these read NSPN…PKWM and LTRF…QQAK. Basic and acidic residues-rich tracts occupy residues 679 to 688 and 706 to 717; these read GRNERGPKWM and FDERKGKGDAKG. Positions 718-731 are enriched in low complexity; it reads KPSASKPKGPKSGA. Positions 732 to 741 are enriched in polar residues; sequence NAPQSQQPKT.

It belongs to the UPF0313 family. The cofactor is [4Fe-4S] cluster.

The sequence is that of UPF0313 protein SO_0311 from Shewanella oneidensis (strain ATCC 700550 / JCM 31522 / CIP 106686 / LMG 19005 / NCIMB 14063 / MR-1).